Here is a 63-residue protein sequence, read N- to C-terminus: Large ribosomal subunit protein uL29 (63 aa).

The protein belongs to the universal ribosomal protein uL29 family.

This chain is Large ribosomal subunit protein uL29, found in Shewanella pealeana (strain ATCC 700345 / ANG-SQ1).